The primary structure comprises 163 residues: ATP synthase subunit b (163 aa).

Residues 1–21 (MISFNLTSIVNLVGFLAFMFL) form a helical membrane-spanning segment.

The protein belongs to the ATPase B chain family. F-type ATPases have 2 components, F(1) - the catalytic core - and F(0) - the membrane proton channel. F(1) has five subunits: alpha(3), beta(3), gamma(1), delta(1), epsilon(1). F(0) has three main subunits: a(1), b(2) and c(10-14). The alpha and beta chains form an alternating ring which encloses part of the gamma chain. F(1) is attached to F(0) by a central stalk formed by the gamma and epsilon chains, while a peripheral stalk is formed by the delta and b chains.

Its subcellular location is the cell inner membrane. In terms of biological role, f(1)F(0) ATP synthase produces ATP from ADP in the presence of a proton or sodium gradient. F-type ATPases consist of two structural domains, F(1) containing the extramembraneous catalytic core and F(0) containing the membrane proton channel, linked together by a central stalk and a peripheral stalk. During catalysis, ATP synthesis in the catalytic domain of F(1) is coupled via a rotary mechanism of the central stalk subunits to proton translocation. Component of the F(0) channel, it forms part of the peripheral stalk, linking F(1) to F(0). This Petrotoga mobilis (strain DSM 10674 / SJ95) protein is ATP synthase subunit b.